The following is a 167-amino-acid chain: Large ribosomal subunit protein uL10 (167 aa).

Belongs to the universal ribosomal protein uL10 family. As to quaternary structure, part of the ribosomal stalk of the 50S ribosomal subunit. The N-terminus interacts with L11 and the large rRNA to form the base of the stalk. The C-terminus forms an elongated spine to which L12 dimers bind in a sequential fashion forming a multimeric L10(L12)X complex.

Functionally, forms part of the ribosomal stalk, playing a central role in the interaction of the ribosome with GTP-bound translation factors. This is Large ribosomal subunit protein uL10 from Flavobacterium johnsoniae (strain ATCC 17061 / DSM 2064 / JCM 8514 / BCRC 14874 / CCUG 350202 / NBRC 14942 / NCIMB 11054 / UW101) (Cytophaga johnsonae).